A 245-amino-acid chain; its full sequence is Small ribosomal subunit protein uS3 (245 aa).

One can recognise a KH type-2 domain in the interval 38–106 (IRKYLNTRLA…EVQINIFEIK (69 aa)). The segment at 225–245 (YEGSGDKSVKRRKRNGIKKNE) is disordered. Positions 233–245 (VKRRKRNGIKKNE) are enriched in basic residues.

Belongs to the universal ribosomal protein uS3 family. In terms of assembly, part of the 30S ribosomal subunit. Forms a tight complex with proteins S10 and S14.

Binds the lower part of the 30S subunit head. Binds mRNA in the 70S ribosome, positioning it for translation. This is Small ribosomal subunit protein uS3 from Azobacteroides pseudotrichonymphae genomovar. CFP2.